The chain runs to 317 residues: MTTQLDALKQMTVVVADTGDIEAMKLYKPQDATTNPSLILSASALPQYVSLIDDAVAYAKAKSSDKAQQLIDAEDKLAVNIGLEILKLVPGRISTEVDARLSYDIQGTIEKARKIIALYNEAGVANDRILIKVASTWQGIRAAEVLEKEGINCNLTLLFSQAQARACAEAGVYLISPFVGRILDWYKANSDKQEYAPAEDPGVISVTQIYNYYKQYGYKTVVMGASFRNIGEITELAGCDRLTIAPPLLKQLQENEAPLARKLEYKGEVQTRPAPMTEAEFYWEHNADPMAVEKLAEGIRKFAADIEKLEAMLAAKL.

Residue Lys-132 is the Schiff-base intermediate with substrate of the active site.

Belongs to the transaldolase family. Type 1 subfamily. In terms of assembly, homodimer.

It is found in the cytoplasm. It catalyses the reaction D-sedoheptulose 7-phosphate + D-glyceraldehyde 3-phosphate = D-erythrose 4-phosphate + beta-D-fructose 6-phosphate. It functions in the pathway carbohydrate degradation; pentose phosphate pathway; D-glyceraldehyde 3-phosphate and beta-D-fructose 6-phosphate from D-ribose 5-phosphate and D-xylulose 5-phosphate (non-oxidative stage): step 2/3. Functionally, transaldolase is important for the balance of metabolites in the pentose-phosphate pathway. The sequence is that of Transaldolase from Actinobacillus succinogenes (strain ATCC 55618 / DSM 22257 / CCUG 43843 / 130Z).